Reading from the N-terminus, the 212-residue chain is Ribonuclease HII (212 aa).

Residues 1–199 (MIGGIDEAGR…VGGRIGLGRN (199 aa)) form the RNase H type-2 domain. Residues Asp-6, Glu-7, and Asp-101 each contribute to the a divalent metal cation site.

The protein belongs to the RNase HII family. Mn(2+) serves as cofactor. Mg(2+) is required as a cofactor.

It is found in the cytoplasm. The catalysed reaction is Endonucleolytic cleavage to 5'-phosphomonoester.. Functionally, endonuclease that specifically degrades the RNA of RNA-DNA hybrids. The protein is Ribonuclease HII of Pyrobaculum aerophilum (strain ATCC 51768 / DSM 7523 / JCM 9630 / CIP 104966 / NBRC 100827 / IM2).